The primary structure comprises 447 residues: MRSITSSKRVCAHCLSRSRLFSTTVQHRAQPSSNAVPSSPPRSGYARLTNRGLISITGVDSTTFLQGLITQNMLIANDPRRATRRTGTYTAFLNSQGRVLNDAFIYPMPKGDSETDTTGDPAWLVEVDKNEVSSLLKHLKKHKLRSKLKLRALEDGERTVWSSWKDHAEPRWAAYNLESESSSPFAPSSSVAGCIDTRAPGFGSRLVTPGEEDLRVHLPDEAQVAGSQVDLGTYTVRRMLHGIAEGQAEIIRESALPLECNMDMMRGVDFRKGCYVGQELTIRTHHTGVVRKRIVPVQLYANSAPQSGDTPVYDPSAAVALPPSGSNISKVDGRKGRSAGKFLGGVGNIGLALCRLEIMTDIVLTGEGSHYSPEQEFKISWSAPEEGSSSATEPGEVKVKALVPPWLRDYISSGARNLARKVDNQEGHRAKELLYQLEEEEEQRRNE.

The transit peptide at 1-28 (MRSITSSKRVCAHCLSRSRLFSTTVQHR) directs the protein to the mitochondrion. Positions 25–37 (VQHRAQPSSNAVP) are enriched in polar residues. A disordered region spans residues 25–44 (VQHRAQPSSNAVPSSPPRSG).

Belongs to the GcvT family. CAF17/IBA57 subfamily.

The protein resides in the mitochondrion matrix. The protein is Iron-sulfur cluster assembly factor IBA57 homolog, mitochondrial (caf17) of Aspergillus fumigatus (strain ATCC MYA-4609 / CBS 101355 / FGSC A1100 / Af293) (Neosartorya fumigata).